The chain runs to 985 residues: Probable beta-galactosidase C (985 aa).

An N-terminal signal peptide occupies residues 1 to 23; the sequence is MRILSLLFLLLLGFLAGNRVVSA. Residues tyrosine 82, asparagine 127, alanine 128, glutamate 129, and asparagine 187 each coordinate substrate. Glutamate 188 functions as the Proton donor in the catalytic mechanism. Residue tyrosine 251 participates in substrate binding. Cysteine 257 and cysteine 304 are disulfide-bonded. Asparagine 276 carries an N-linked (GlcNAc...) asparagine glycan. Glutamate 287 (nucleophile) is an active-site residue. Residue tyrosine 353 coordinates substrate. 8 N-linked (GlcNAc...) asparagine glycosylation sites follow: asparagine 391, asparagine 434, asparagine 517, asparagine 602, asparagine 677, asparagine 715, asparagine 720, and asparagine 759.

Belongs to the glycosyl hydrolase 35 family.

It is found in the secreted. It catalyses the reaction Hydrolysis of terminal non-reducing beta-D-galactose residues in beta-D-galactosides.. Functionally, cleaves beta-linked terminal galactosyl residues from gangliosides, glycoproteins, and glycosaminoglycans. The sequence is that of Probable beta-galactosidase C (lacC) from Aspergillus clavatus (strain ATCC 1007 / CBS 513.65 / DSM 816 / NCTC 3887 / NRRL 1 / QM 1276 / 107).